The sequence spans 390 residues: Homeobox protein Hox-B2a (390 aa).

4 disordered regions span residues 40-73 (STAI…TASN), 81-100 (TAPP…GAPL), 108-155 (KEKK…LDNV), and 211-338 (MKHK…SLPD). Residues 52-73 (PSLSPCTGNQARPRSQKRTASN) are compositionally biased toward polar residues. The short motif at 103 to 108 (EFPWMK) is the Antp-type hexapeptide element. Positions 118–135 (KPGATAAAAAASPSQASS) are enriched in low complexity. Residues 158–217 (SRRLRTAYTNTQLLELEKEFHFNKYLCRPRRVEIAALLDLTERQVKVWFQNRRMKHKRQT) constitute a DNA-binding region (homeobox). Positions 244-262 (SSQSLEVSGSGSAAPSESE) are enriched in low complexity. Residues 263-290 (TCPTTAAYTNSSDKSQPTPEEGQASQPE) show a composition bias toward polar residues.

The protein belongs to the Antp homeobox family. Proboscipedia subfamily.

It localises to the nucleus. In terms of biological role, sequence-specific transcription factor which is part of a developmental regulatory system that provides cells with specific positional identities on the anterior-posterior axis. Plays an important role in the patterning of hindbrain and pharyngeal arches. The sequence is that of Homeobox protein Hox-B2a (hoxb2a) from Danio rerio (Zebrafish).